Reading from the N-terminus, the 154-residue chain is Ribonuclease H (154 aa).

One can recognise an RNase H type-1 domain in the interval 5-146; sequence EQNIVYLYCD…ADELANRGID (142 aa). D14, E52, D74, and D138 together coordinate Mg(2+).

It belongs to the RNase H family. In terms of assembly, monomer. Mg(2+) serves as cofactor.

It localises to the cytoplasm. It catalyses the reaction Endonucleolytic cleavage to 5'-phosphomonoester.. Functionally, endonuclease that specifically degrades the RNA of RNA-DNA hybrids. The sequence is that of Ribonuclease H from Coxiella burnetii (strain CbuG_Q212) (Coxiella burnetii (strain Q212)).